The following is a 485-amino-acid chain: CUGBP Elav-like family member 5 (485 aa).

A compositionally biased stretch (basic and acidic residues) spans 1 to 11 (MARLTESEARR). The tract at residues 1 to 40 (MARLTESEARRQQQQLLQPRPSPVGSSGPEPPGGQPDGMK) is disordered. Positions 12 to 28 (QQQQLLQPRPSPVGSSG) are enriched in low complexity. 3 RRM domains span residues 45–126 (IKLF…PADS), 134–214 (RKLF…FADT), and 400–478 (CNLF…LKRP).

It belongs to the CELF/BRUNOL family. As to expression, expressed in brain.

Its subcellular location is the nucleus. It localises to the cytoplasm. Functionally, RNA-binding protein implicated in the regulation of pre-mRNA alternative splicing. Mediates exon inclusion and/or exclusion in pre-mRNA that are subject to tissue-specific and developmentally regulated alternative splicing. Specifically activates exon 5 inclusion of cardiac isoforms of TNNT2 during heart remodeling at the juvenile to adult transition. Binds to muscle-specific splicing enhancer (MSE) intronic sites flanking the alternative exon 5 of TNNT2 pre-mRNA. In Homo sapiens (Human), this protein is CUGBP Elav-like family member 5 (CELF5).